The chain runs to 195 residues: Imidazoleglycerol-phosphate dehydratase (195 aa).

The protein belongs to the imidazoleglycerol-phosphate dehydratase family.

The protein resides in the cytoplasm. The catalysed reaction is D-erythro-1-(imidazol-4-yl)glycerol 3-phosphate = 3-(imidazol-4-yl)-2-oxopropyl phosphate + H2O. It participates in amino-acid biosynthesis; L-histidine biosynthesis; L-histidine from 5-phospho-alpha-D-ribose 1-diphosphate: step 6/9. The sequence is that of Imidazoleglycerol-phosphate dehydratase from Hydrogenovibrio crunogenus (strain DSM 25203 / XCL-2) (Thiomicrospira crunogena).